The primary structure comprises 363 residues: Inositol-3-phosphate synthase (363 aa).

Positions 68, 127, 147, 190, 225, and 238 each coordinate NAD(+).

The protein belongs to the myo-inositol 1-phosphate synthase family. As to quaternary structure, monomer. It depends on NAD(+) as a cofactor.

It carries out the reaction D-glucose 6-phosphate = 1D-myo-inositol 3-phosphate. The protein operates within polyol metabolism; myo-inositol biosynthesis; myo-inositol from D-glucose 6-phosphate: step 1/2. Functionally, key enzyme in myo-inositol biosynthesis pathway that catalyzes the conversion of glucose 6-phosphate to 1D-myo-inositol 3-phosphate in a NAD-dependent manner. Plays a key role in oxidative stress resistance as its product is the precursor of the protective antioxidant mycothiol (MSH or AcCys-GlcN-Ins). The sequence is that of Inositol-3-phosphate synthase from Corynebacterium glutamicum (strain ATCC 13032 / DSM 20300 / JCM 1318 / BCRC 11384 / CCUG 27702 / LMG 3730 / NBRC 12168 / NCIMB 10025 / NRRL B-2784 / 534).